Here is a 388-residue protein sequence, read N- to C-terminus: Trans-enoyl reductase tenC (388 aa).

51–54 (VDGK) is an NADP(+) binding site. A substrate-binding site is contributed by 142–149 (VGIASVGM). NADP(+) is bound by residues 219 to 222 (SSES), Tyr237, and 284 to 285 (LD). Substrate is bound at residue 304-308 (SFTQF). 373-374 (IK) contributes to the NADP(+) binding site.

It belongs to the zinc-containing alcohol dehydrogenase family. In terms of assembly, monomer.

It participates in secondary metabolite biosynthesis. Functionally, trans-enoyl reductase; part of the gene cluster that mediates the biosynthesis of tenellin-type 2-pyridones, iron-chelating compounds involved in iron stress tolerance, competition with the natural competitor fungus Metarhizium robertsii and insect hosts infection. TenC collaborates with the hybrid PKS-NRPS synthetase tenS to catalyze the assembly of the polyketide-amino acid backbone, since tenS lacks a designated enoylreductase (ER) domain. Upon formation of the polyketide backbone on the thiotemplate of tenS, the triketide is transferred to the NRPS module and linked to tyrosine to produce the pyrrolidine-2-dione intermediates, including pretellinin A, 11-hydropretellenin A, 12-hydropretellenin A, 13-hydropretellenin A, 14-hydropretellenin A, 12-oxopretellenin A and prototellinin D. The pathway begins with the assembly of the polyketide-amino acid backbone by the hybrid PKS-NRPS tenS with the help of the enoyl reductase tenC. These enzymes catalyze the synthesis of the pyrrolidine-2-dione intermediates pretellinin A, 11-hydropretellenin A, 12-hydropretellenin A, 13-hydropretellenin A, 14-hydropretellenin A, 12-oxopretellenin A and prototellinin D. The cytochrome P450 monooxygenase tenA then catalyzes an oxidative ring expansion of pretenellin A and 14-hydropretellenin A to form the 2-pyridone core, leading to pretenellin B and pyridovericin, respectively. The cytochrome P450 monooxygenase tenB is then required for the selective N-hydroxylation of the 2-pyridone nitrogen of yield tellinin and 15-hydroxytellenin (15-HT), respectively. The UDP-glucosyltransferase GT1 and the methyltransferase MT1, located outside the tenS gene cluster, contribute to the stepwise glycosylation and methylation of 15-HT to obtain the glycoside pyridovericin-N-O-(4-O-methyl-beta-D-glucopyranoside) (PMGP). Additional related compounds such as 1-O-methyl-15-HT, (8Z)-1-O-methyl-15-HT, and O-methyltenellin A are also produced but the enzymes involved in their biosynthesis have still to be determined. The polypeptide is Trans-enoyl reductase tenC (Beauveria bassiana (strain ARSEF 2860) (White muscardine disease fungus)).